The following is a 223-amino-acid chain: MKDTLKLYFVCGTVDCSRKNILTVVEEALQAGITLFQFREKGFTALQGKEKIAMAKQLQILCKQYQVPFIIDDDIDLVELIDADGLHIGQNDLPVDEARRRLPDKIIGLSVSTMAEYQKSQLSVVDYIGIGPFNPTQSKADAKPAVGNRTTKAVREINQDIPIVAIGGITSDFVHDIIESGADGIAVISAISKANHIVDATRQLRYEVEKALVNRQKRSDVIK.

Residues 37–41 (QFREK) and Asp-72 each bind 4-amino-2-methyl-5-(diphosphooxymethyl)pyrimidine. Mg(2+) contacts are provided by Asp-73 and Asp-92. Ser-110 provides a ligand contact to 4-amino-2-methyl-5-(diphosphooxymethyl)pyrimidine. 136–138 (TQS) is a 2-[(2R,5Z)-2-carboxy-4-methylthiazol-5(2H)-ylidene]ethyl phosphate binding site. Lys-139 serves as a coordination point for 4-amino-2-methyl-5-(diphosphooxymethyl)pyrimidine. 2-[(2R,5Z)-2-carboxy-4-methylthiazol-5(2H)-ylidene]ethyl phosphate contacts are provided by residues Gly-168 and 188–189 (IS).

Belongs to the thiamine-phosphate synthase family. The cofactor is Mg(2+).

It carries out the reaction 2-[(2R,5Z)-2-carboxy-4-methylthiazol-5(2H)-ylidene]ethyl phosphate + 4-amino-2-methyl-5-(diphosphooxymethyl)pyrimidine + 2 H(+) = thiamine phosphate + CO2 + diphosphate. It catalyses the reaction 2-(2-carboxy-4-methylthiazol-5-yl)ethyl phosphate + 4-amino-2-methyl-5-(diphosphooxymethyl)pyrimidine + 2 H(+) = thiamine phosphate + CO2 + diphosphate. The enzyme catalyses 4-methyl-5-(2-phosphooxyethyl)-thiazole + 4-amino-2-methyl-5-(diphosphooxymethyl)pyrimidine + H(+) = thiamine phosphate + diphosphate. It functions in the pathway cofactor biosynthesis; thiamine diphosphate biosynthesis; thiamine phosphate from 4-amino-2-methyl-5-diphosphomethylpyrimidine and 4-methyl-5-(2-phosphoethyl)-thiazole: step 1/1. Condenses 4-methyl-5-(beta-hydroxyethyl)thiazole monophosphate (THZ-P) and 2-methyl-4-amino-5-hydroxymethyl pyrimidine pyrophosphate (HMP-PP) to form thiamine monophosphate (TMP). This chain is Thiamine-phosphate synthase, found in Streptococcus agalactiae serotype III (strain NEM316).